The sequence spans 634 residues: Threonine--tRNA ligase (634 aa).

In terms of domain architecture, TGS spans 1 to 61 (MINIRFPDGS…NSNCELRLIT (61 aa)). The catalytic stretch occupies residues 241–532 (DHRKIGKVLD…LIEHYAGNLP (292 aa)). Residues C332, H383, and H509 each contribute to the Zn(2+) site.

This sequence belongs to the class-II aminoacyl-tRNA synthetase family. Homodimer. The cofactor is Zn(2+).

Its subcellular location is the cytoplasm. It carries out the reaction tRNA(Thr) + L-threonine + ATP = L-threonyl-tRNA(Thr) + AMP + diphosphate + H(+). In terms of biological role, catalyzes the attachment of threonine to tRNA(Thr) in a two-step reaction: L-threonine is first activated by ATP to form Thr-AMP and then transferred to the acceptor end of tRNA(Thr). Also edits incorrectly charged L-seryl-tRNA(Thr). The protein is Threonine--tRNA ligase of Francisella tularensis subsp. tularensis (strain FSC 198).